A 336-amino-acid chain; its full sequence is Dihydroorotate dehydrogenase (quinone) (336 aa).

Residues 62 to 66 (AGLDK) and Thr86 contribute to the FMN site. Lys66 is a substrate binding site. 111-115 (NRMGF) serves as a coordination point for substrate. Residues Asn139 and Asn172 each contribute to the FMN site. Residue Asn172 coordinates substrate. The active-site Nucleophile is Ser175. Substrate is bound at residue Asn177. FMN contacts are provided by Lys217 and Thr245. 246 to 247 (NT) is a binding site for substrate. Residues Gly268, Gly297, and 318–319 (YS) contribute to the FMN site.

Belongs to the dihydroorotate dehydrogenase family. Type 2 subfamily. In terms of assembly, monomer. The cofactor is FMN.

The protein resides in the cell membrane. The catalysed reaction is (S)-dihydroorotate + a quinone = orotate + a quinol. The protein operates within pyrimidine metabolism; UMP biosynthesis via de novo pathway; orotate from (S)-dihydroorotate (quinone route): step 1/1. Its function is as follows. Catalyzes the conversion of dihydroorotate to orotate with quinone as electron acceptor. The sequence is that of Dihydroorotate dehydrogenase (quinone) from Vibrio atlanticus (strain LGP32) (Vibrio splendidus (strain Mel32)).